The primary structure comprises 41 residues: GLLGLGYGGYGYGAALAAPAAVSYAAPAIAAAPAVSYAAPA.

4 repeat units span residues 17 to 20 (AAPA), 25 to 28 (AAPA), 31 to 34 (AAPA), and 38 to 41 (AAPA).

Functionally, component of the cuticle of migratory locust which contains more than 100 different structural proteins. The sequence is that of Cuticle protein 32 from Locusta migratoria (Migratory locust).